Here is a 638-residue protein sequence, read N- to C-terminus: Chaperone protein DnaK (638 aa).

T200 carries the post-translational modification Phosphothreonine; by autocatalysis. Residues 598–621 (SLHMAATAEQQSGSTGAGAGASAK) form a disordered region.

It belongs to the heat shock protein 70 family.

In terms of biological role, acts as a chaperone. The polypeptide is Chaperone protein DnaK (Xylella fastidiosa (strain M23)).